Reading from the N-terminus, the 396-residue chain is Succinyl-diaminopimelate desuccinylase (396 aa).

Histidine 74 is a binding site for Zn(2+). Aspartate 76 is a catalytic residue. Aspartate 107 is a Zn(2+) binding site. The active-site Proton acceptor is glutamate 142. Zn(2+)-binding residues include glutamate 143, glutamate 171, and histidine 360.

Belongs to the peptidase M20A family. DapE subfamily. As to quaternary structure, homodimer. It depends on Zn(2+) as a cofactor. The cofactor is Co(2+).

It carries out the reaction N-succinyl-(2S,6S)-2,6-diaminopimelate + H2O = (2S,6S)-2,6-diaminopimelate + succinate. The protein operates within amino-acid biosynthesis; L-lysine biosynthesis via DAP pathway; LL-2,6-diaminopimelate from (S)-tetrahydrodipicolinate (succinylase route): step 3/3. Catalyzes the hydrolysis of N-succinyl-L,L-diaminopimelic acid (SDAP), forming succinate and LL-2,6-diaminopimelate (DAP), an intermediate involved in the bacterial biosynthesis of lysine and meso-diaminopimelic acid, an essential component of bacterial cell walls. The polypeptide is Succinyl-diaminopimelate desuccinylase (Methylobacterium nodulans (strain LMG 21967 / CNCM I-2342 / ORS 2060)).